The sequence spans 393 residues: Sulfate adenylyltransferase (393 aa).

The protein belongs to the sulfate adenylyltransferase family.

The enzyme catalyses sulfate + ATP + H(+) = adenosine 5'-phosphosulfate + diphosphate. It participates in sulfur metabolism; hydrogen sulfide biosynthesis; sulfite from sulfate: step 1/3. The protein is Sulfate adenylyltransferase of Symbiobacterium thermophilum (strain DSM 24528 / JCM 14929 / IAM 14863 / T).